We begin with the raw amino-acid sequence, 214 residues long: Octanoyltransferase (214 aa).

The BPL/LPL catalytic domain maps to 29 to 214; it reads STTPDEIWIL…EHLQKQLMPT (186 aa). Substrate contacts are provided by residues 69 to 76, 146 to 148, and 159 to 161; these read RGGEITYH, ALG, and GLA. C177 acts as the Acyl-thioester intermediate in catalysis.

The protein belongs to the LipB family.

The protein localises to the cytoplasm. It carries out the reaction octanoyl-[ACP] + L-lysyl-[protein] = N(6)-octanoyl-L-lysyl-[protein] + holo-[ACP] + H(+). Its pathway is protein modification; protein lipoylation via endogenous pathway; protein N(6)-(lipoyl)lysine from octanoyl-[acyl-carrier-protein]: step 1/2. Its function is as follows. Catalyzes the transfer of endogenously produced octanoic acid from octanoyl-acyl-carrier-protein onto the lipoyl domains of lipoate-dependent enzymes. Lipoyl-ACP can also act as a substrate although octanoyl-ACP is likely to be the physiological substrate. The sequence is that of Octanoyltransferase from Polynucleobacter asymbioticus (strain DSM 18221 / CIP 109841 / QLW-P1DMWA-1) (Polynucleobacter necessarius subsp. asymbioticus).